The chain runs to 322 residues: Ribose-phosphate pyrophosphokinase (322 aa).

ATP is bound by residues 43 to 45 (DGE) and 102 to 103 (RQ). Mg(2+) contacts are provided by histidine 137 and aspartate 177. Lysine 201 is an active-site residue. D-ribose 5-phosphate-binding positions include arginine 203, aspartate 227, and 231-235 (DTAGT).

The protein belongs to the ribose-phosphate pyrophosphokinase family. Class I subfamily. As to quaternary structure, homohexamer. Mg(2+) serves as cofactor.

It is found in the cytoplasm. It carries out the reaction D-ribose 5-phosphate + ATP = 5-phospho-alpha-D-ribose 1-diphosphate + AMP + H(+). It functions in the pathway metabolic intermediate biosynthesis; 5-phospho-alpha-D-ribose 1-diphosphate biosynthesis; 5-phospho-alpha-D-ribose 1-diphosphate from D-ribose 5-phosphate (route I): step 1/1. Involved in the biosynthesis of the central metabolite phospho-alpha-D-ribosyl-1-pyrophosphate (PRPP) via the transfer of pyrophosphoryl group from ATP to 1-hydroxyl of ribose-5-phosphate (Rib-5-P). This is Ribose-phosphate pyrophosphokinase from Xylella fastidiosa (strain Temecula1 / ATCC 700964).